The sequence spans 218 residues: Small ribosomal subunit protein uS3c (218 aa).

In terms of domain architecture, KH type-2 spans 47–120; it reads VRTHIKSSSN…KLHIAIEKVA (74 aa).

The protein belongs to the universal ribosomal protein uS3 family. Part of the 30S ribosomal subunit.

It localises to the plastid. Its subcellular location is the chloroplast. The polypeptide is Small ribosomal subunit protein uS3c (rps3) (Picea abies (Norway spruce)).